We begin with the raw amino-acid sequence, 117 residues long: Large ribosomal subunit protein bL19 (117 aa).

This sequence belongs to the bacterial ribosomal protein bL19 family.

This protein is located at the 30S-50S ribosomal subunit interface and may play a role in the structure and function of the aminoacyl-tRNA binding site. The chain is Large ribosomal subunit protein bL19 from Shewanella piezotolerans (strain WP3 / JCM 13877).